A 143-amino-acid polypeptide reads, in one-letter code: Transthyretin-like protein 33 (143 aa).

A signal peptide spans 1–20; that stretch reads MSRLACISSLFILCAIGSEA.

It belongs to the nematode transthyretin-like family. In terms of tissue distribution, expressed in head cells next to and anterior of the first pharyngeal bulb, the pharynx, and the hypodermis.

The protein localises to the secreted. In terms of biological role, protects dopaminergic neurons from degeneration caused by oxidative stress. The protein is Transthyretin-like protein 33 of Caenorhabditis elegans.